Reading from the N-terminus, the 419-residue chain is UDP-N-acetylglucosamine 1-carboxyvinyltransferase (419 aa).

Residue 22–23 coordinates phosphoenolpyruvate; it reads KN. Arg91 contacts UDP-N-acetyl-alpha-D-glucosamine. Cys115 serves as the catalytic Proton donor. Residue Cys115 is modified to 2-(S-cysteinyl)pyruvic acid O-phosphothioketal. UDP-N-acetyl-alpha-D-glucosamine contacts are provided by residues 120 to 124, 160 to 163, Asp305, and Ile327; these read RPVDL and KVSV.

Belongs to the EPSP synthase family. MurA subfamily.

The protein resides in the cytoplasm. It carries out the reaction phosphoenolpyruvate + UDP-N-acetyl-alpha-D-glucosamine = UDP-N-acetyl-3-O-(1-carboxyvinyl)-alpha-D-glucosamine + phosphate. Its pathway is cell wall biogenesis; peptidoglycan biosynthesis. Functionally, cell wall formation. Adds enolpyruvyl to UDP-N-acetylglucosamine. This chain is UDP-N-acetylglucosamine 1-carboxyvinyltransferase, found in Klebsiella pneumoniae (strain 342).